The primary structure comprises 560 residues: Dihydroxy-acid dehydratase (560 aa).

Cys52 is a binding site for [2Fe-2S] cluster. Position 84 (Asp84) interacts with Mg(2+). Cys125 provides a ligand contact to [2Fe-2S] cluster. Residues Asp126 and Lys127 each contribute to the Mg(2+) site. Lys127 carries the N6-carboxylysine modification. Cys197 is a binding site for [2Fe-2S] cluster. Residue Glu448 participates in Mg(2+) binding. The active-site Proton acceptor is Ser474.

Belongs to the IlvD/Edd family. Homodimer. [2Fe-2S] cluster is required as a cofactor. It depends on Mg(2+) as a cofactor.

The catalysed reaction is (2R)-2,3-dihydroxy-3-methylbutanoate = 3-methyl-2-oxobutanoate + H2O. It carries out the reaction (2R,3R)-2,3-dihydroxy-3-methylpentanoate = (S)-3-methyl-2-oxopentanoate + H2O. Its pathway is amino-acid biosynthesis; L-isoleucine biosynthesis; L-isoleucine from 2-oxobutanoate: step 3/4. It functions in the pathway amino-acid biosynthesis; L-valine biosynthesis; L-valine from pyruvate: step 3/4. Functions in the biosynthesis of branched-chain amino acids. Catalyzes the dehydration of (2R,3R)-2,3-dihydroxy-3-methylpentanoate (2,3-dihydroxy-3-methylvalerate) into 2-oxo-3-methylpentanoate (2-oxo-3-methylvalerate) and of (2R)-2,3-dihydroxy-3-methylbutanoate (2,3-dihydroxyisovalerate) into 2-oxo-3-methylbutanoate (2-oxoisovalerate), the penultimate precursor to L-isoleucine and L-valine, respectively. This chain is Dihydroxy-acid dehydratase, found in Francisella tularensis subsp. novicida (strain U112).